A 375-amino-acid chain; its full sequence is Succinyl-diaminopimelate desuccinylase (375 aa).

His-66 serves as a coordination point for Zn(2+). Asp-68 is a catalytic residue. Residue Asp-99 participates in Zn(2+) binding. The active-site Proton acceptor is the Glu-133. 3 residues coordinate Zn(2+): Glu-134, Glu-162, and His-348.

It belongs to the peptidase M20A family. DapE subfamily. As to quaternary structure, homodimer. Zn(2+) is required as a cofactor. Co(2+) serves as cofactor.

It catalyses the reaction N-succinyl-(2S,6S)-2,6-diaminopimelate + H2O = (2S,6S)-2,6-diaminopimelate + succinate. The protein operates within amino-acid biosynthesis; L-lysine biosynthesis via DAP pathway; LL-2,6-diaminopimelate from (S)-tetrahydrodipicolinate (succinylase route): step 3/3. Its function is as follows. Catalyzes the hydrolysis of N-succinyl-L,L-diaminopimelic acid (SDAP), forming succinate and LL-2,6-diaminopimelate (DAP), an intermediate involved in the bacterial biosynthesis of lysine and meso-diaminopimelic acid, an essential component of bacterial cell walls. The sequence is that of Succinyl-diaminopimelate desuccinylase from Enterobacter sp. (strain 638).